A 1348-amino-acid polypeptide reads, in one-letter code: Adhesion G protein-coupled receptor F5 (1348 aa).

The N-terminal stretch at 1-21 (MRSPRTFTFYFLLLVICSSEA) is a signal peptide. The Extracellular portion of the chain corresponds to 22–1019 (ALSTPTEPIV…LKILLDIISY (998 aa)). Positions 163–271 (PEAFITLKLK…NSFQGTPSNE (109 aa)) constitute an SEA domain. Ig-like domains lie at 268–366 (PSNE…LDVT), 367–464 (PIRI…IAVT), and 469–559 (ANLT…KDVT). Asn-270, Asn-286, Asn-337, and Asn-349 each carry an N-linked (GlcNAc...) asparagine glycan. Cys-291 and Cys-348 are oxidised to a cystine. The cysteines at positions 389 and 447 are disulfide-linked. Asn-470, Asn-538, and Asn-665 each carry an N-linked (GlcNAc...) asparagine glycan. Cys-490 and Cys-543 are oxidised to a cystine. A Phosphoserine modification is found at Ser-818. Positions 841–1005 (TPPFLAHPNV…SILMSPDSPD (165 aa)) constitute a GAIN-B domain. Intrachain disulfides connect Cys-953–Cys-987 and Cys-972–Cys-989. Residues 953–1005 (CVFWNFSLANNTGGWDSSGCSVEDDGRDNRDRVFCKCNHLTSFSILMSPDSPD) are GPS. Positions 993-1008 (TSFSILMSPDSPDPGS) are tethered agonist. The chain crosses the membrane as a helical span at residues 1020-1040 (IGLGFSIVSLAACLVVEAMVW). Topologically, residues 1041 to 1055 (KSVTKNRTSYMRHIC) are cytoplasmic. The helical transmembrane segment at 1056-1076 (IVNIAFCLLIADIWFIVAGAI) threads the bilayer. Over 1077-1092 (HDGRYPLNETACVAAT) the chain is Extracellular. Residues 1093-1113 (FFIHFFYLSVFFWMLTLGLML) form a helical membrane-spanning segment. At 1114–1130 (FYRLIFILHDASKSTQK) the chain is on the cytoplasmic side. Residues 1131–1151 (AIAFSLGYGCPLIISSITVGV) form a helical membrane-spanning segment. At 1152–1175 (TQPQEVYMRKNACWLNWEDTRALL) the chain is on the extracellular side. Residues 1176–1196 (AFAIPALIIVVVNVSITVVVI) traverse the membrane as a helical segment. Over 1197 to 1221 (TKILRPSIGDKPGKQEKSSLFQISK) the chain is Cytoplasmic. A helical transmembrane segment spans residues 1222–1242 (SIGVLTPLLGLTWGFGLATVI). Topologically, residues 1243-1250 (QGSNAVFH) are extracellular. A helical membrane pass occupies residues 1251-1271 (IIFTLLNAFQGLFILLFGCLW). Over 1272–1348 (DQKVQEALLH…NSSSAYSLLN (77 aa)) the chain is Cytoplasmic. The residue at position 1302 (Thr-1302) is a Phosphothreonine. At Ser-1309 the chain carries Phosphoserine. The disordered stretch occupies residues 1328-1348 (STPETTSSSLENSSSAYSLLN).

The protein belongs to the G-protein coupled receptor 2 family. Adhesion G-protein coupled receptor (ADGR) subfamily. As to quaternary structure, homodimer; disulfide-linked. Heterodimer of 2 chains generated by proteolytic processing; the large extracellular N-terminal fragment and the membrane-bound C-terminal fragment predominantly remain associated and non-covalently linked. Fragment generates by the processing enzyme furin remains attached to the extracellular N-terminal fragment. Interacts (via N-terminal extracellular domain) with SFTPD. In terms of processing, highly glycosylated. Post-translationally, proteolytically cleaved at multiple sites: one in the GPS region of the GAIN-B domain (S1 site) and the other in the SEA domain (S2 site). The proteolytic cleavage at S1 site generates an extracellular subunit and a seven-transmembrane subunit. The proteolytic cleavage at S2 site generates a fragment that undergoes proteolytic cleavage by the processing enzyme furin. Widely expressed, with highest levels in lung, pancreas, kidney and heart. In the kidney, expressed more abundantly in the medulla than in the cortex, predominantly expressed in A-intercalated cells (at protein level). Expressed in endothelial cells from various tissues, including brain, heart, kidney, liver, lung and muscle. In the lung, expressed in alveolar type II (ATII) cells (at protein level). Expressed in pancreatic islets of Langerhans, predominantly in delta cells, as well as in endothelial cells. Expressed in white adipose tissue.

It localises to the cell membrane. Its activity is regulated as follows. As an adhesion G protein-coupled receptor (aGPCR) exhibits a large N-terminal extracellular domain containing highly conserved GPCR autoproteolysis-inducing (GAIN) domain. During synthesis, intracellular autoproteolytic processing of nascent chain within the GAIN domain generates a mature protein, consisting of an N-terminal fragment that is non-covalently linked to the C-terminal fragment. The mature protein is routed to the plasma membrane where the N- and C-terminal fragments remain associated, forming the holoreceptor. Dissociation of the aGPCR fragments stimulates G protein signaling through the action of the tethered-peptide agonist stalk that is occluded within the GAIN domain in the holoreceptor form. This dissociation might be induced by ligand binding, such as that of sFNDC4. Its function is as follows. Adhesion G protein-coupled receptor. In alveolar type II (ATII or AT2) cells, required for normal lung surfactant homeostasis. Modulation of both surfactant secretion and uptake by ATII cells is mediated by the downstream activation of GNAQ/GNA11 proteins and may be a consequence of increased cortical F-actin assembly induced by ADGRF5 activation. In the kidney, may play a role in the regulation of acid excretion into the primary urine, possibly by regulating the surface expression of V-ATPase proton pump. As a receptor for soluble FNDC4 (sFNDC4), required for proper systemic glucose tolerance, specifically sensitizing white adipose tissue to insulin. Also plays a role in sFNDC4-induced decrease of local inflammation in white adipose tissue. This chain is Adhesion G protein-coupled receptor F5 (Adgrf5), found in Mus musculus (Mouse).